The following is a 157-amino-acid chain: 2-C-methyl-D-erythritol 2,4-cyclodiphosphate synthase (157 aa).

A divalent metal cation-binding residues include Asp8 and His10. Residues 8-10 (DVH) and 34-35 (HS) each bind 4-CDP-2-C-methyl-D-erythritol 2-phosphate. His42 serves as a coordination point for a divalent metal cation. Residues 56–58 (DIG), 61–65 (FPDTD), 100–106 (AQRPKMA), 132–135 (TTEE), and Phe139 each bind 4-CDP-2-C-methyl-D-erythritol 2-phosphate.

This sequence belongs to the IspF family. In terms of assembly, homotrimer. Requires a divalent metal cation as cofactor.

It catalyses the reaction 4-CDP-2-C-methyl-D-erythritol 2-phosphate = 2-C-methyl-D-erythritol 2,4-cyclic diphosphate + CMP. The protein operates within isoprenoid biosynthesis; isopentenyl diphosphate biosynthesis via DXP pathway; isopentenyl diphosphate from 1-deoxy-D-xylulose 5-phosphate: step 4/6. Its function is as follows. Involved in the biosynthesis of isopentenyl diphosphate (IPP) and dimethylallyl diphosphate (DMAPP), two major building blocks of isoprenoid compounds. Catalyzes the conversion of 4-diphosphocytidyl-2-C-methyl-D-erythritol 2-phosphate (CDP-ME2P) to 2-C-methyl-D-erythritol 2,4-cyclodiphosphate (ME-CPP) with a corresponding release of cytidine 5-monophosphate (CMP). This chain is 2-C-methyl-D-erythritol 2,4-cyclodiphosphate synthase, found in Trichlorobacter lovleyi (strain ATCC BAA-1151 / DSM 17278 / SZ) (Geobacter lovleyi).